The chain runs to 142 residues: Galactose-6-phosphate isomerase subunit LacA (142 aa).

The protein belongs to the LacAB/RpiB family. As to quaternary structure, heteromultimeric protein consisting of LacA and LacB.

The catalysed reaction is aldehydo-D-galactose 6-phosphate = keto-D-tagatose 6-phosphate. It participates in carbohydrate metabolism; D-galactose 6-phosphate degradation; D-tagatose 6-phosphate from D-galactose 6-phosphate: step 1/1. This is Galactose-6-phosphate isomerase subunit LacA from Staphylococcus aureus.